Here is a 982-residue protein sequence, read N- to C-terminus: Filament-like plant protein 4 (982 aa).

Coiled-coil stretches lie at residues aspartate 39–glutamate 83 and glutamate 125–leucine 291. The tract at residues aspartate 311–methionine 333 is disordered. The span at valine 323–methionine 333 shows a compositional bias: low complexity. Residues aspartate 345–alanine 401 are a coiled coil. Residues glutamine 423 to serine 433 show a composition bias toward polar residues. Disordered regions lie at residues glutamine 423–lysine 466 and glutamine 687–cysteine 711. A coiled-coil region spans residues glutamate 452–glutamate 475. The segment covering asparagine 457–lysine 466 has biased composition (basic and acidic residues). Positions glutamate 693–serine 705 are enriched in polar residues. Residues alanine 722–leucine 885 adopt a coiled-coil conformation. Composition is skewed to polar residues over residues threonine 896 to leucine 910 and alanine 918 to lysine 943. Positions threonine 896–lysine 982 are disordered.

The protein belongs to the FPP family. In terms of assembly, interacts with WPP/MAF proteins.

This Arabidopsis thaliana (Mouse-ear cress) protein is Filament-like plant protein 4 (FPP4).